The sequence spans 555 residues: Spermine oxidase (555 aa).

FAD-binding positions include alanine 35, glutamate 55, arginine 63, 79 to 80 (TW), and valine 261. The disordered stretch occupies residues 271–306 (ARPRGPEIEPRGEGDHNHDTGEGGQGGEEPRGGRWD). Over residues 274 to 291 (RGPEIEPRGEGDHNHDTG) the composition is skewed to basic and acidic residues. FAD contacts are provided by residues glutamate 519 and 528–529 (TT).

This sequence belongs to the flavin monoamine oxidase family. The cofactor is FAD. Widely expressed. Expressed in human tumor cell lines. Isoform 4 is only found in an embryonal kidney cell line.

Its subcellular location is the cytoplasm. It is found in the nucleus. It carries out the reaction spermine + O2 + H2O = 3-aminopropanal + spermidine + H2O2. The protein operates within amine and polyamine degradation; spermine degradation. With respect to regulation, inhibited at more than 90% by SL-11144, SL-11150 and SL-11158, at concentrations less than 1 uM. In terms of biological role, flavoenzyme which catalyzes the oxidation of spermine to spermidine. Can also use N(1)-acetylspermine and spermidine as substrates, with different affinity depending on the isoform (isozyme) and on the experimental conditions. Plays an important role in the regulation of polyamine intracellular concentration and has the potential to act as a determinant of cellular sensitivity to the antitumor polyamine analogs. May contribute to beta-alanine production via aldehyde dehydrogenase conversion of 3-amino-propanal. The sequence is that of Spermine oxidase (SMOX) from Homo sapiens (Human).